We begin with the raw amino-acid sequence, 460 residues long: Probable Xaa-Pro aminopeptidase PEPP (460 aa).

Mn(2+) is bound by residues D256, D267, E390, and E430.

It belongs to the peptidase M24B family. It depends on Mn(2+) as a cofactor.

The enzyme catalyses Release of any N-terminal amino acid, including proline, that is linked to proline, even from a dipeptide or tripeptide.. Its function is as follows. Catalyzes the removal of a penultimate prolyl residue from the N-termini of peptides. This chain is Probable Xaa-Pro aminopeptidase PEPP (PEPP), found in Podospora anserina (strain S / ATCC MYA-4624 / DSM 980 / FGSC 10383) (Pleurage anserina).